A 549-amino-acid chain; its full sequence is ATP synthase subunit alpha (549 aa).

172 to 179 (GDRKTGKT) is a binding site for ATP.

Belongs to the ATPase alpha/beta chains family. In terms of assembly, F-type ATPases have 2 components, CF(1) - the catalytic core - and CF(0) - the membrane proton channel. CF(1) has five subunits: alpha(3), beta(3), gamma(1), delta(1), epsilon(1). CF(0) has three main subunits: a(1), b(2) and c(9-12). The alpha and beta chains form an alternating ring which encloses part of the gamma chain. CF(1) is attached to CF(0) by a central stalk formed by the gamma and epsilon chains, while a peripheral stalk is formed by the delta and b chains.

It is found in the cell membrane. It carries out the reaction ATP + H2O + 4 H(+)(in) = ADP + phosphate + 5 H(+)(out). In terms of biological role, produces ATP from ADP in the presence of a proton gradient across the membrane. The alpha chain is a regulatory subunit. The polypeptide is ATP synthase subunit alpha (Mycobacterium tuberculosis (strain CDC 1551 / Oshkosh)).